The following is a 619-amino-acid chain: Chaperone protein HscA homolog (619 aa).

This sequence belongs to the heat shock protein 70 family.

Chaperone involved in the maturation of iron-sulfur cluster-containing proteins. Has a low intrinsic ATPase activity which is markedly stimulated by HscB. This chain is Chaperone protein HscA homolog, found in Haemophilus influenzae (strain PittEE).